The sequence spans 1001 residues: Copper-transporting ATPase RAN1 (1001 aa).

Positions 1–21 (MAPSRRDLQLTPVTGGSSSQI) are disordered. Over 1-298 (MAPSRRDLQL…TGEASNMFRR (298 aa)) the chain is Cytoplasmic. Residues 11 to 21 (TPVTGGSSSQI) are compositionally biased toward polar residues. 2 HMA domains span residues 56–122 (RKIQ…FEAE) and 133–199 (LVGQ…FEGS). Positions 67, 70, 144, and 147 each coordinate Cu(+). Positions 207–273 (DKLVLRVDGI…GIEEDGFGKF (67 aa)) constitute an HMA 3; degenerate domain. Residues 299–320 (FISSLVLSIPLFFIQVICPHIA) form a helical membrane-spanning segment. The Extracellular portion of the chain corresponds to 321 to 338 (LFDALLVWRCGPFMMGDW). A helical transmembrane segment spans residues 339 to 358 (LKWALVSVIQFVIGKRFYVA). Residues 359 to 365 (AWRALRN) are Cytoplasmic-facing. A helical transmembrane segment spans residues 366 to 386 (GSTNMDVLVALGTSASYFYSV). At 387-403 (GALLYGAVTGFWSPTYF) the chain is on the extracellular side. Residues 404-424 (DASAMLITFVLLGKYLESLAK) traverse the membrane as a helical segment. At 425–558 (GKTSDAMKKL…KAPIQKFADY (134 aa)) the chain is on the cytoplasmic side. The helical transmembrane segment at 559-581 (VASIFVPVVITLALFTLVGWSIG) threads the bilayer. Topologically, residues 582–602 (GAVGAYPDEWLPENGTHFVFS) are extracellular. A helical transmembrane segment spans residues 603–620 (LMFSISVVVIACPCALGL). The Cytoplasmic segment spans residues 621 to 931 (ATPTAVMVAT…DLSRKTLTRI (311 aa)). Asp-658 acts as the 4-aspartylphosphate intermediate in catalysis. Mg(2+) is bound by residues Asp-877 and Asp-881. A helical membrane pass occupies residues 932–951 (RLNYVFAMAYNVVSIPIAAG). At 952 to 963 (VFFPVLRVQLPP) the chain is on the extracellular side. The helical transmembrane segment at 964 to 982 (WAAGACMALSSVSVVCSSL) threads the bilayer. Over 983–1001 (LLRRYKKPRLTTVLKITTE) the chain is Cytoplasmic.

It belongs to the cation transport ATPase (P-type) (TC 3.A.3) family. Type IB subfamily.

The protein localises to the membrane. The enzyme catalyses Cu(+)(in) + ATP + H2O = Cu(+)(out) + ADP + phosphate + H(+). Its function is as follows. Involved in copper import into the cell. Essential for ethylene signaling, which requires copper. Acts by delivering copper to create functional hormone receptors. The sequence is that of Copper-transporting ATPase RAN1 (RAN1) from Arabidopsis thaliana (Mouse-ear cress).